Here is a 475-residue protein sequence, read N- to C-terminus: Mitochondrial adenyl nucleotide antiporter SLC25A24 (475 aa).

The tract at residues 1–173 (MLRWLRGFVL…RFWKHSTGID (173 aa)) is regulatory N-terminal domain. Residues 1–197 (MLRWLRGFVL…ERKSGQWWRQ (197 aa)) lie on the Mitochondrial intermembrane side of the membrane. 4 EF-hand domains span residues 19 to 54 (EPPT…LGIP), 55 to 88 (LGQD…KDHE), 86 to 121 (DHEK…LGLT), and 122 to 157 (ISEQ…NPVA). Ca(2+) is bound by residues D32, N34, D36, V38, E43, D68, N70, D72, K74, E79, D99, N101, D103, K105, E110, D135, D137, T139, T141, and E146. The segment at 159–168 (IEEIIRFWKH) is linker region. Positions 174–475 (IGDSLTIPDE…MKQTLGVTQK (302 aa)) are C-terminal transmembrane transporter domain. Solcar repeat units follow at residues 192–276 (GQWW…YKKL), 284–369 (IGTF…LKSH), and 381–469 (PGVL…MKQT). A helical membrane pass occupies residues 198–215 (LLAGGIAGAVSRTSTAPL). At 216–250 (DRLKVMMQVHGSKSMNIFGGFRQMIKEGGVRSLWR) the chain is on the mitochondrial matrix side. The helical transmembrane segment at 251–270 (GNGTNVIKIAPETAVKFWVY) threads the bilayer. At 271–293 (EQYKKLLTEEGQKIGTFERFISG) the chain is on the mitochondrial intermembrane side. The helical transmembrane segment at 294-307 (SMAGATAQTFIYPM) threads the bilayer. Residues 308 to 343 (EVMKTRLAVGKTGQYSGIYDCAKKILKYEGFGAFYK) are Mitochondrial matrix-facing. K318 carries the post-translational modification N6-acetyllysine; alternate. N6-succinyllysine; alternate is present on K318. K334 is subject to N6-acetyllysine. Residues 344–363 (GYVPNLLGIIPYAGIDLAVY) form a helical membrane-spanning segment. Residues 364–386 (ELLKSHWLDNFAKDSVNPGVLVL) lie on the Mitochondrial intermembrane side of the membrane. The chain crosses the membrane as a helical span at residues 387-404 (LGCGALSSTCGQLASYPL). The Mitochondrial matrix segment spans residues 405-443 (ALVRTRMQAQAMLEGAPQLNMVGLFRRIISKEGLPGLYR). Residue K435 is modified to N6-acetyllysine; alternate. The residue at position 435 (K435) is an N6-succinyllysine; alternate. Residues 444 to 463 (GITPNFMKVLPAVGISYVVY) form a helical membrane-spanning segment. The Mitochondrial intermembrane segment spans residues 464 to 475 (ENMKQTLGVTQK).

It belongs to the mitochondrial carrier (TC 2.A.29) family. In terms of assembly, monomer. As to expression, mainly expressed in colon. Also expressed in the small intestine proximal to the ileum. Weakly expressed in kidney but not in the liver.

It localises to the mitochondrion inner membrane. The protein resides in the peroxisome membrane. It carries out the reaction Mg(2+)(out) + phosphate(in) + ATP(out) = Mg(2+)(in) + phosphate(out) + ATP(in). The catalysed reaction is ADP(out) + phosphate(in) + H(+)(out) = ADP(in) + phosphate(out) + H(+)(in). It catalyses the reaction AMP(out) + phosphate(in) = AMP(in) + phosphate(out). The enzyme catalyses phosphate(in) + ATP(out) + 2 H(+)(out) = phosphate(out) + ATP(in) + 2 H(+)(in). It carries out the reaction dADP(in) + ADP(out) = dADP(out) + ADP(in). The catalysed reaction is Mg(2+)(in) + ADP(out) + ATP(in) + H(+)(out) = Mg(2+)(out) + ADP(in) + ATP(out) + H(+)(in). It catalyses the reaction ADP(out) + diphosphate(in) = ADP(in) + diphosphate(out). The enzyme catalyses dAMP(in) + ADP(out) + H(+)(out) = dAMP(out) + ADP(in) + H(+)(in). It carries out the reaction 3'-AMP(in) + ADP(out) + H(+)(out) = 3'-AMP(out) + ADP(in) + H(+)(in). The catalysed reaction is dAMP(out) + phosphate(in) = dAMP(in) + phosphate(out). It catalyses the reaction 3'-AMP(out) + phosphate(in) = 3'-AMP(in) + phosphate(out). The enzyme catalyses dADP(out) + phosphate(in) + H(+)(out) = dADP(in) + phosphate(out) + H(+)(in). With respect to regulation, activated by an increase in cytosolic calcium levels that induce a conformational change of the N-terminal regulatory domain, uncapping the channel and allowing transport. Inhibited by bathophenanthroline, mersalyl, p-hydroxymercuribenzoate, bromcresol purple and tannic acid. Functionally, electroneutral antiporter that mediates the transport of adenyl nucleotides through the inner mitochondrial membrane. Originally identified as an ATP-magnesium/inorganic phosphate antiporter, it also acts as a broad specificity adenyl nucleotide antiporter. By regulating the mitochondrial matrix adenyl nucleotide pool could adapt to changing cellular energetic demands and indirectly regulate adenyl nucleotide-dependent metabolic pathways. In vitro, a low activity is also observed with guanyl and pyrimidine nucleotides. May play a role in protecting cells against oxidative stress-induced cell death, by buffering calcium levels in the mitochondrial matrix through the formation of calcium-phosphate precipitates. This is Mitochondrial adenyl nucleotide antiporter SLC25A24 (SLC25A24) from Oryctolagus cuniculus (Rabbit).